Consider the following 429-residue polypeptide: MTEIINVTAREILDSRGNPTVEVEVAVGTGDVGRAAVPSGASTGEHEALELRDGDKGRYLGKGVRKAVANVIDEIAPAVVGLDASDQASLDARMIALDGTPTKSKLGANAILGVSLAAAKAAATAHGLPLYRYVGGAGARTLPVPLMNILNGGAHADSNVDIQEFMVVPLGLPTFAEALRCGAEIFHALKKVLKGKGAATGVGDEGGYAPSLASNEEALAVIMEAIGQAGYEPGKQVALALDCAASEFYDKKAGKYELEGEGKRFDGKGLVEYYAQLAAKYPIVSIEDGCDEDDWATWKLLTERLGGKLQLVGDDLFVTNVTRLARGIEQGVTNSILVKVNQIGSLTETLEAVRMAHRAGYTTVMSHRSGETEDTTIADLAVACDCGQIKTGSASRTDRIAKYNQLLRIEEELGGSGRYAGRSAFKALR.

Residue Gln-163 participates in (2R)-2-phosphoglycerate binding. Glu-205 (proton donor) is an active-site residue. Mg(2+) contacts are provided by Asp-242, Glu-287, and Asp-314. Residues Lys-339, Arg-368, Ser-369, and Lys-390 each contribute to the (2R)-2-phosphoglycerate site. The active-site Proton acceptor is Lys-339.

Belongs to the enolase family. It depends on Mg(2+) as a cofactor.

It localises to the cytoplasm. It is found in the secreted. Its subcellular location is the cell surface. It carries out the reaction (2R)-2-phosphoglycerate = phosphoenolpyruvate + H2O. Its pathway is carbohydrate degradation; glycolysis; pyruvate from D-glyceraldehyde 3-phosphate: step 4/5. Its function is as follows. Catalyzes the reversible conversion of 2-phosphoglycerate (2-PG) into phosphoenolpyruvate (PEP). It is essential for the degradation of carbohydrates via glycolysis. This chain is Enolase, found in Anaeromyxobacter dehalogenans (strain 2CP-1 / ATCC BAA-258).